Consider the following 103-residue polypeptide: N(4)-acetylcytidine amidohydrolase (103 aa).

In terms of domain architecture, ASCH spans 6 to 101 (ITFFQRFQDD…QTQFYVIEFK (96 aa)). Lys21 (proton acceptor) is an active-site residue. Thr24 functions as the Nucleophile in the catalytic mechanism. Residue Glu74 is the Proton donor of the active site.

It belongs to the N(4)-acetylcytidine amidohydrolase family.

The enzyme catalyses N(4)-acetylcytidine + H2O = cytidine + acetate + H(+). It catalyses the reaction N(4)-acetyl-2'-deoxycytidine + H2O = 2'-deoxycytidine + acetate + H(+). The catalysed reaction is N(4)-acetylcytosine + H2O = cytosine + acetate + H(+). Functionally, catalyzes the hydrolysis of N(4)-acetylcytidine (ac4C). In Escherichia coli O127:H6 (strain E2348/69 / EPEC), this protein is N(4)-acetylcytidine amidohydrolase (yqfB).